Consider the following 132-residue polypeptide: uncharacterized protein (132 aa).

The next 3 helical transmembrane spans lie at 19–39 (FTWIFGAWDIPLITLLVFIFL), 58–78 (IGLRGITKKGLILVVLLVAVM), and 93–113 (LIAYFYIMNEGISILENCAAL).

It belongs to the bacteriophage holin family. Cp-1 holin subfamily.

Its subcellular location is the cell membrane. This is an uncharacterized protein from Clostridium perfringens.